The following is a 570-amino-acid chain: Guanine nucleotide-binding protein alpha-3 subunit (570 aa).

One can recognise a PH domain in the interval 10-113; that stretch reads RETLRAYLSK…WIEAIKHAIE (104 aa). The G-alpha domain maps to 144 to 570; it reads PVLKLLLLGT…IISKTLEFYC (427 aa). Residues 147–160 form a G1 motif region; that stretch reads KLLLLGTGESGKST. 152-159 is a binding site for GTP; sequence GTGESGKS. Ser-159 lines the Mg(2+) pocket. Low complexity-rich tracts occupy residues 254 to 272 and 290 to 316; these read NNNS…SSSS and NSNS…RSNS. The interval 254 to 321 is disordered; the sequence is NNNSNSSSLK…NRSNSDGSSN (68 aa). Positions 386 to 394 are G2 motif; the sequence is DILKSRATT. GTP is bound by residues 388–394, 414–418, 483–486, and Ala-544; these read LKSRATT, DVAGQ, and NKID. A Mg(2+)-binding site is contributed by Thr-394. Residues 410 to 419 form a G3 motif region; the sequence is FRIVDVAGQR. The G4 motif stretch occupies residues 479 to 486; that stretch reads ILFLNKID. Residues 542–547 are G5 motif; the sequence is TCATDT.

The protein belongs to the G-alpha family. G proteins are composed of 3 units; alpha, beta and gamma. The alpha chain contains the guanine nucleotide binding site.

Guanine nucleotide-binding proteins (G proteins) are involved as modulators or transducers in various transmembrane signaling systems. G alpha-3 plays a role in development. G alpha-3 mutants fail to aggregate. This Dictyostelium discoideum (Social amoeba) protein is Guanine nucleotide-binding protein alpha-3 subunit (gpaC).